A 338-amino-acid chain; its full sequence is Popeye domain-containing protein 1-A (338 aa).

Over 1 to 40 (MTTESIFITTLPMDFNSQFDNITIGLNDNETLCENWREIH) the chain is Extracellular. 2 N-linked (GlcNAc...) asparagine glycosylation sites follow: Asn-21 and Asn-29. The chain crosses the membrane as a helical span at residues 41-61 (HLVFHLANTCFAAGLVIPSTL). Residues 62–65 (NLHM) lie on the Cytoplasmic side of the membrane. A helical transmembrane segment spans residues 66 to 86 (LFLRGMLCLGCTFFIIWAVLF). Residues 87-91 (RCALD) lie on the Extracellular side of the membrane. Residues 92 to 112 (IMIWNATFLSINFMHFVYLVY) form a helical membrane-spanning segment. Topologically, residues 113 to 338 (KKRPIKIKKE…VGPLSHAVFC (226 aa)) are cytoplasmic. Residues 296–317 (TNDNEDGLQNFLRGTSTTSSQR) are disordered. The span at 307–317 (LRGTSTTSSQR) shows a compositional bias: polar residues.

This sequence belongs to the popeye family. Expressed in the heart.

It localises to the lateral cell membrane. It is found in the cell junction. The protein localises to the tight junction. The protein resides in the membrane. Its function is as follows. Cell adhesion molecule involved in the establishment and/or maintenance of cell integrity. Plays a role in vamp3-mediated vesicular transport and recycling of different receptor molecules. May be involved in the formation and regulation of the tight junction (TJ) paracellular permeability barrier in epithelial cells. May induce primordial adhesive contact and aggregation of epithelial cells in a Ca(2+)-independent manner. May be involved in epithelial movement during corneal sheet formation and regeneration. May play a role in the regulation of cell shape and movement by modulating the Rho-GTPase activity. May also be involved in striated muscle regeneration and in the regulation of cell spreading. The protein is Popeye domain-containing protein 1-A (popdc1-a) of Xenopus laevis (African clawed frog).